The sequence spans 304 residues: MNNKSIRTQILIEALPYIQQFRGAIFVIKYGGAAMKDLISKERLIADIVFLSCIGLKLVCVHGGGPEINFWLNKMNVESKFHDGIRITDELTMQVVEMVLAGKINKELVSLLNNKGVKGVGLCGKDGTILTARKAQCGSIDMGLVGEIKSVDPYLILTLLKENYIPVIASVGADETGKTYNINADFVAGEIAASLGAEKLILVTNTSGILADVSQPESLIRDTNIMQLRQLLSRGIISKGMIPKVNCSIRSLAQGVRAVHIIDGTKPHSLLLEVLTNNGIGTRFLYKQSILLQLNCFSFSNVSI.

Substrate-binding positions include 64–65 (GG), Arg86, and Asn181.

This sequence belongs to the acetylglutamate kinase family. ArgB subfamily.

It is found in the plastid. The protein resides in the chloroplast. It catalyses the reaction N-acetyl-L-glutamate + ATP = N-acetyl-L-glutamyl 5-phosphate + ADP. Its pathway is amino-acid biosynthesis; L-arginine biosynthesis; N(2)-acetyl-L-ornithine from L-glutamate: step 2/4. Functionally, catalyzes the ATP-dependent phosphorylation of N-acetyl-L-glutamate. The polypeptide is Acetylglutamate kinase (Cyanidium caldarium (Red alga)).